An 87-amino-acid chain; its full sequence is Small ribosomal subunit protein bS20 (87 aa).

The disordered stretch occupies residues 1 to 24 (MANTAQARKRARQSVERNKHNSSL).

It belongs to the bacterial ribosomal protein bS20 family.

Binds directly to 16S ribosomal RNA. This chain is Small ribosomal subunit protein bS20, found in Bordetella petrii (strain ATCC BAA-461 / DSM 12804 / CCUG 43448).